Consider the following 490-residue polypeptide: GTPase Der (490 aa).

EngA-type G domains are found at residues 3–166 (PVVA…MEDL) and 203–376 (IKLA…DSST). Residues 9–16 (GRPNVGKS), 56–60 (DTGGI), 118–121 (NKTD), 209–216 (GRPNVGKS), 256–260 (DTAGV), and 321–324 (NKWD) contribute to the GTP site. Residues 377–461 (RRVGTSMLTR…PIRIQFKEGE (85 aa)) enclose the KH-like domain.

It belongs to the TRAFAC class TrmE-Era-EngA-EngB-Septin-like GTPase superfamily. EngA (Der) GTPase family. In terms of assembly, associates with the 50S ribosomal subunit.

GTPase that plays an essential role in the late steps of ribosome biogenesis. The polypeptide is GTPase Der (Escherichia coli O81 (strain ED1a)).